The following is a 452-amino-acid chain: Tripartite motif-containing protein 49 (452 aa).

The RING-type zinc finger occupies Cys15–Thr56. A B box-type zinc finger spans residues Ser88–Ile129. Residues Cys93, His96, Cys115, and His121 each coordinate Zn(2+). Positions Glu269–Phe452 constitute a B30.2/SPRY domain.

Belongs to the TRIM/RBCC family. In terms of tissue distribution, preferentially expressed in testis.

This chain is Tripartite motif-containing protein 49 (TRIM49), found in Homo sapiens (Human).